A 318-amino-acid chain; its full sequence is Ribosomal RNA small subunit methyltransferase H (318 aa).

Residues 42 to 44 (GGH), D62, F86, D108, and Q115 each bind S-adenosyl-L-methionine.

The protein belongs to the methyltransferase superfamily. RsmH family.

The protein localises to the cytoplasm. The enzyme catalyses cytidine(1402) in 16S rRNA + S-adenosyl-L-methionine = N(4)-methylcytidine(1402) in 16S rRNA + S-adenosyl-L-homocysteine + H(+). Specifically methylates the N4 position of cytidine in position 1402 (C1402) of 16S rRNA. The sequence is that of Ribosomal RNA small subunit methyltransferase H from Yersinia pestis (strain Pestoides F).